Reading from the N-terminus, the 278-residue chain is NADPH-dependent 7-cyano-7-deazaguanine reductase (278 aa).

Position 87–89 (87–89 (IES)) interacts with substrate. 89–90 (SK) serves as a coordination point for NADPH. The Thioimide intermediate role is filled by Cys-185. Catalysis depends on Asp-192, which acts as the Proton donor. Residue 224–225 (HE) coordinates substrate. 253-254 (RG) lines the NADPH pocket. The tract at residues 255–278 (GLDINPYRSTNPTFSVQNHRSFRQ) is disordered. Residues 261 to 278 (YRSTNPTFSVQNHRSFRQ) show a composition bias toward polar residues.

The protein belongs to the GTP cyclohydrolase I family. QueF type 2 subfamily. As to quaternary structure, homodimer.

It localises to the cytoplasm. The enzyme catalyses 7-aminomethyl-7-carbaguanine + 2 NADP(+) = 7-cyano-7-deazaguanine + 2 NADPH + 3 H(+). It functions in the pathway tRNA modification; tRNA-queuosine biosynthesis. Catalyzes the NADPH-dependent reduction of 7-cyano-7-deazaguanine (preQ0) to 7-aminomethyl-7-deazaguanine (preQ1). The protein is NADPH-dependent 7-cyano-7-deazaguanine reductase of Coxiella burnetii (strain CbuG_Q212) (Coxiella burnetii (strain Q212)).